The chain runs to 280 residues: 3-methyl-2-oxobutanoate hydroxymethyltransferase (280 aa).

Residues aspartate 49 and aspartate 88 each contribute to the Mg(2+) site. 3-methyl-2-oxobutanoate contacts are provided by residues 49–50 (DS), aspartate 88, and lysine 118. Glutamate 120 serves as a coordination point for Mg(2+). Catalysis depends on glutamate 187, which acts as the Proton acceptor.

This sequence belongs to the PanB family. Homodecamer; pentamer of dimers. The cofactor is Mg(2+).

The protein localises to the cytoplasm. It carries out the reaction 3-methyl-2-oxobutanoate + (6R)-5,10-methylene-5,6,7,8-tetrahydrofolate + H2O = 2-dehydropantoate + (6S)-5,6,7,8-tetrahydrofolate. The protein operates within cofactor biosynthesis; (R)-pantothenate biosynthesis; (R)-pantoate from 3-methyl-2-oxobutanoate: step 1/2. Catalyzes the reversible reaction in which hydroxymethyl group from 5,10-methylenetetrahydrofolate is transferred onto alpha-ketoisovalerate to form ketopantoate. This chain is 3-methyl-2-oxobutanoate hydroxymethyltransferase, found in Xanthobacter autotrophicus (strain ATCC BAA-1158 / Py2).